The chain runs to 469 residues: E3 ubiquitin-protein ligase pellino homolog 3 (469 aa).

Residues methionine 1–glutamate 39 are disordered. At serine 11 the chain carries Phosphoserine.

This sequence belongs to the pellino family. In terms of assembly, interacts with TRAF6, MAP3K14 and MAP3K7. Post-translationally, phosphorylated by IRAK1 enhancing its E3 ligase activity. Highly expressed in brain, heart and testis, and at lower level in kidney, liver, lung, placenta, small intestine, spleen and stomach. Isoform 1 is not expressed in lung.

It carries out the reaction S-ubiquitinyl-[E2 ubiquitin-conjugating enzyme]-L-cysteine + [acceptor protein]-L-lysine = [E2 ubiquitin-conjugating enzyme]-L-cysteine + N(6)-ubiquitinyl-[acceptor protein]-L-lysine.. It participates in protein modification; protein ubiquitination. Its function is as follows. E3 ubiquitin ligase catalyzing the covalent attachment of ubiquitin moieties onto substrate proteins. Involved in the TLR and IL-1 signaling pathways via interaction with the complex containing IRAK kinases and TRAF6. Mediates 'Lys-63'-linked polyubiquitination of IRAK1. Can activate AP1/JUN and ELK1. Acts as a regulator of innate immunity by mediating 'Lys-63'-linked polyubiquitination of RIPK2 downstream of NOD1 and NOD2, thereby transforming RIPK2 into a scaffolding protein for downstream effectors, ultimately leading to activation of the NF-kappa-B and MAP kinases signaling. Catalyzes 'Lys-63'-linked polyubiquitination of RIPK2 in parallel of XIAP. This chain is E3 ubiquitin-protein ligase pellino homolog 3, found in Homo sapiens (Human).